Consider the following 336-residue polypeptide: F420-dependent glucose-6-phosphate dehydrogenase (336 aa).

A coenzyme F420-(gamma-Glu)n-binding site is contributed by aspartate 39. Histidine 40 (proton donor) is an active-site residue. Residues threonine 76 and 107-108 (TG) each bind coenzyme F420-(gamma-Glu)n. The active-site Proton acceptor is glutamate 109. Residues asparagine 112, 177-178 (GG), and 180-181 (AV) contribute to the coenzyme F420-(gamma-Glu)n site. Substrate contacts are provided by threonine 195, lysine 198, lysine 259, and arginine 283.

It belongs to the F420-dependent glucose-6-phosphate dehydrogenase family. Homodimer.

It catalyses the reaction oxidized coenzyme F420-(gamma-L-Glu)(n) + D-glucose 6-phosphate + H(+) = 6-phospho-D-glucono-1,5-lactone + reduced coenzyme F420-(gamma-L-Glu)(n). Its function is as follows. Catalyzes the coenzyme F420-dependent oxidation of glucose 6-phosphate (G6P) to 6-phosphogluconolactone. Appears to have a role in resistance to oxidative stress, via its consumption of G6P that serves as a source of reducing power to combat oxidative stress in mycobacteria. This chain is F420-dependent glucose-6-phosphate dehydrogenase, found in Mycobacterium avium (strain 104).